Reading from the N-terminus, the 285-residue chain is K88 fimbrial protein AD (285 aa).

An N-terminal signal peptide occupies residues 1–21 (MKKTLIALAIAASAASGMAHA).

Belongs to the fimbrial K88 protein family. In terms of assembly, K88 fimbria, 0.1-1 micrometer in length and 7 nanometers in diameter, is composed of about 100 identical subunits.

It localises to the fimbrium. Its function is as follows. K88 major fimbrial subunit. Fimbriae (also called pili), are polar filaments radiating from the surface of the bacterium to a length of 0.5-1.5 micrometers and numbering 100-300 per cell. They enable bacteria to colonize the epithelium of specific host organs. In Escherichia coli, this protein is K88 fimbrial protein AD (faeG).